We begin with the raw amino-acid sequence, 99 residues long: MVNVKVEFLGGLDAIFGKQRVHKIKMDKEDPVTVGDLIDHIVSTMINNPNDVSIFIEDDSIRPGIITLINDTDWELEGEKDYILEDGDIISFTSTLHGG.

Residue Gly-99 is modified to 1-thioglycine. Gly-99 participates in a covalent cross-link: Glycyl lysine isopeptide (Gly-Lys) (interchain with K-? in acceptor proteins).

Belongs to the URM1 family. In terms of assembly, homodimer; homodimerization may provide an autoprotection to the highly active C-terminal residue before attacking its substrates. Interacts with NCS2 and NCS6. Forms a conjugate with the target protein AHP1. C-terminal thiocarboxylation occurs in 2 steps, it is first acyl-adenylated (-COAMP) via the hesA/moeB/thiF part of UBA4, then thiocarboxylated (-COSH) via the rhodanese domain of UBA4.

The protein localises to the cytoplasm. The protein resides in the nucleus. Its pathway is tRNA modification; 5-methoxycarbonylmethyl-2-thiouridine-tRNA biosynthesis. In terms of biological role, acts as a sulfur carrier required for 2-thiolation of mcm(5)S(2)U at tRNA wobble positions of cytosolic tRNA(Lys), tRNA(Glu) and tRNA(Gln). Serves as sulfur donor in tRNA 2-thiolation reaction by being thiocarboxylated (-COSH) at its C-terminus by the MOCS3 homolog UBA4. The sulfur is then transferred to tRNA to form 2-thiolation of mcm(5)S(2)U. Prior mcm(5) tRNA modification by the elongator complex is required for 2-thiolation. Also acts as a ubiquitin-like protein (UBL) that is covalently conjugated via an isopeptide bond to lysine residues of target proteins such as AHP1. The thiocarboxylated form serves as substrate for conjugation and oxidative stress specifically induces the formation of UBL-protein conjugates. This is Ubiquitin-related modifier 1 from Saccharomyces cerevisiae (strain RM11-1a) (Baker's yeast).